A 1020-amino-acid polypeptide reads, in one-letter code: Tetrathionate reductase subunit A (1020 aa).

The tat-type signal signal peptide spans 1–33 (MANLTRRQWLKVGLAVGGMVTFGLSYRDVAKRA). The 4Fe-4S Mo/W bis-MGD-type domain occupies 71–154 (QTIAMTQCFG…TLLESLYSPL (84 aa)). Residues Cys78, Cys81, Cys85, and Cys140 each coordinate [4Fe-4S] cluster.

This sequence belongs to the prokaryotic molybdopterin-containing oxidoreductase family. In terms of assembly, probably composed of three subunits: TtrA, TtrB and TtrC. [4Fe-4S] cluster serves as cofactor. Mo-bis(molybdopterin guanine dinucleotide) is required as a cofactor. Post-translationally, predicted to be exported by the Tat system. The position of the signal peptide cleavage has not been experimentally proven.

The protein resides in the periplasm. It is found in the cell inner membrane. In terms of biological role, part of a membrane-bound tetrathionate reductase that catalyzes the reduction of tetrathionate to thiosulfate. TtrA is the catalytic subunit. During mice infection, the ability to use tetrathionate as an electron acceptor is a growth advantage for S.typhimurium over the competing microbiota in the lumen of the inflamed gut. This Salmonella typhimurium (strain LT2 / SGSC1412 / ATCC 700720) protein is Tetrathionate reductase subunit A (ttrA).